We begin with the raw amino-acid sequence, 82 residues long: ATP synthase subunit c, chloroplastic (82 aa).

2 consecutive transmembrane segments (helical) span residues 7 to 27 (AASVVASGLSVGLAAIGPGIG) and 57 to 77 (LAFMESLTIYGLVVALALLFA).

It belongs to the ATPase C chain family. In terms of assembly, F-type ATPases have 2 components, F(1) - the catalytic core - and F(0) - the membrane proton channel. F(1) has five subunits: alpha(3), beta(3), gamma(1), delta(1), epsilon(1). F(0) has four main subunits: a(1), b(1), b'(1) and c(10-14). The alpha and beta chains form an alternating ring which encloses part of the gamma chain. F(1) is attached to F(0) by a central stalk formed by the gamma and epsilon chains, while a peripheral stalk is formed by the delta, b and b' chains.

The protein resides in the plastid. Its subcellular location is the chloroplast thylakoid membrane. Its function is as follows. F(1)F(0) ATP synthase produces ATP from ADP in the presence of a proton or sodium gradient. F-type ATPases consist of two structural domains, F(1) containing the extramembraneous catalytic core and F(0) containing the membrane proton channel, linked together by a central stalk and a peripheral stalk. During catalysis, ATP synthesis in the catalytic domain of F(1) is coupled via a rotary mechanism of the central stalk subunits to proton translocation. Key component of the F(0) channel; it plays a direct role in translocation across the membrane. A homomeric c-ring of between 10-14 subunits forms the central stalk rotor element with the F(1) delta and epsilon subunits. The chain is ATP synthase subunit c, chloroplastic from Rhodomonas salina (Cryptomonas salina).